The sequence spans 132 residues: U-scoloptoxin(11)-Sa1a (132 aa).

Residues 1–19 (MIRFFAFVLFFATQELILC) form the signal peptide.

It belongs to the scoloptoxin-11 family. Contains 5 disulfide bonds. In terms of tissue distribution, expressed by the venom gland.

It is found in the secreted. The polypeptide is U-scoloptoxin(11)-Sa1a (Scolopendra alternans (Florida Keys giant centipede)).